Reading from the N-terminus, the 590-residue chain is Hyaluronan synthase 1 (590 aa).

At 1 to 31 (MKDKAAATMEIPEDPGIPKNLERKRPIVWRM) the chain is on the cytoplasmic side. Residues 32–52 (IYYSFAVLLLAAFTAAYVTEF) form a helical membrane-spanning segment. The Extracellular portion of the chain corresponds to 53–60 (QILTHEDV). A helical membrane pass occupies residues 61–81 (LFSLGLYGLVMFLHLMMQSLF). The Cytoplasmic portion of the chain corresponds to 82–401 (AYLEIRRINK…YNAQWWYKHH (320 aa)). Residues 402 to 422 (IWMTYESVVHFIFPFFITATV) form a helical membrane-spanning segment. At 423 to 425 (IRL) the chain is on the extracellular side. The chain crosses the membrane as a helical span at residues 426-446 (LYASTIWNVVWLLLCIQIMSV). Topologically, residues 447 to 456 (LKSLYACWLR) are cytoplasmic. Residues 457-477 (GNPIMLLMSLYSMLYMTGLLP) traverse the membrane as a helical segment. At 478-505 (SKYFAMLTINKSGWGTSGRKKIVGNYMP) the chain is on the extracellular side. The helical transmembrane segment at 506–526 (VLPLSIWMAVLCGGVGYSIYM) threads the bilayer. Residues 527-543 (DCHQDWSTPEKQKELYH) lie on the Cytoplasmic side of the membrane. Residues 544–564 (LLYGCISYTLYWVLMALMYWV) traverse the membrane as a helical segment. Residues 565–588 (WVKRCCRKRSQTVTLVHDIPERLV) are Extracellular-facing.

This sequence belongs to the NodC/HAS family. Mg(2+) is required as a cofactor.

The protein resides in the membrane. The catalysed reaction is [hyaluronan](n) + UDP-N-acetyl-alpha-D-glucosamine = N-acetyl-beta-D-glucosaminyl-(1-&gt;4)-[hyaluronan](n) + UDP + H(+). It catalyses the reaction N-acetyl-beta-D-glucosaminyl-(1-&gt;4)-[hyaluronan](n) + UDP-alpha-D-glucuronate = [hyaluronan](n+1) + UDP + H(+). The protein operates within glycan biosynthesis; hyaluronan biosynthesis. Its function is as follows. Catalyzes the addition of GlcNAc or GlcUA monosaccharides to the nascent hyaluronan polymer. Therefore, it is essential to hyaluronan synthesis a major component of most extracellular matrices that has a structural role in tissues architectures and regulates cell adhesion, migration and differentiation. Also able to catalyze the synthesis of chito-oligosaccharide depending on the substrate. This chain is Hyaluronan synthase 1 (has1), found in Xenopus tropicalis (Western clawed frog).